Here is a 590-residue protein sequence, read N- to C-terminus: Shugoshin (590 aa).

The disordered stretch occupies residues M1–D20. Positions E11–D20 are enriched in basic and acidic residues. The stretch at Q25–T86 forms a coiled coil. 3 disordered regions span residues L133 to E235, P291 to K337, and R411 to I550. Positions S173–K185 are enriched in basic and acidic residues. Positions P302 to S326 are enriched in low complexity. The span at P328–K337 shows a compositional bias: basic residues. Basic and acidic residues predominate over residues K448–A459. Over residues I513 to P526 the composition is skewed to polar residues. Residues S527 to I550 are compositionally biased toward low complexity.

It belongs to the shugoshin family. Post-translationally, ubiquitinated by the anaphase promoting complex (APC) at the onset of anaphase, conducting to its degradation.

It localises to the chromosome. It is found in the centromere. The protein localises to the kinetochore. The protein resides in the cytoplasm. Its subcellular location is the cytoskeleton. It localises to the spindle pole. In terms of biological role, plays a central role in chromosome cohesion during mitosis and meiosis divisions by preventing premature dissociation of cohesin complex from centromeres after prophase, when most of cohesin complex dissociates from chromosomes arms. Probably act by protecting REC8 and RAD21 from separase degradation during anaphase. Also acts as a spindle checkpoint component required for sensing tension between sister chromatids during mitosis, its degradation when they separate preventing cell cycle arrest and chromosome loss in anaphase, a time when sister chromatids are no longer under tension. The sequence is that of Shugoshin (SGO1) from Saccharomyces cerevisiae (strain ATCC 204508 / S288c) (Baker's yeast).